An 84-amino-acid chain; its full sequence is Cell division protein CrgA (84 aa).

The next 2 helical transmembrane spans lie at 31–51 (VAPV…VFYV) and 60–80 (ALDN…FGVS).

Belongs to the CrgA family.

It is found in the cell membrane. Involved in cell division. Coordinates growth and cell division. Required for the formation of the sporulation septa. The protein is Cell division protein CrgA of Streptomyces avermitilis (strain ATCC 31267 / DSM 46492 / JCM 5070 / NBRC 14893 / NCIMB 12804 / NRRL 8165 / MA-4680).